The sequence spans 428 residues: Maltoporin 1 (428 aa).

Positions 1-25 (MTMKVKLLTTSVALALSMTAFSSNA) are cleaved as a signal peptide.

The protein belongs to the porin LamB (TC 1.B.3) family. As to quaternary structure, homotrimer formed of three 18-stranded antiparallel beta-barrels, containing three independent channels.

The protein localises to the cell outer membrane. The enzyme catalyses beta-maltose(in) = beta-maltose(out). Functionally, involved in the transport of maltose and maltodextrins. The sequence is that of Maltoporin 1 from Aeromonas salmonicida (strain A449).